Consider the following 591-residue polypeptide: Protein misato homolog 1 (591 aa).

It belongs to the misato family.

The protein localises to the mitochondrion outer membrane. It is found in the cytoplasm. Functionally, involved in the regulation of mitochondrial distribution and morphology. Required for mitochondrial fusion and mitochondrial network formation. This Danio rerio (Zebrafish) protein is Protein misato homolog 1 (msto1).